The primary structure comprises 485 residues: Cytolytic protein enterolobin (485 aa).

2 cysteine pairs are disulfide-bonded: cysteine 34–cysteine 98 and cysteine 183–cysteine 189.

It belongs to the aerolysin family. In terms of assembly, oligomerizes as a hexamer. The N-terminus is blocked.

Functionally, cytolytic protein with insecticidal activity. Acts as a pro-inflammatory agent. This chain is Cytolytic protein enterolobin, found in Enterolobium contortisiliquum (Pacara earpod tree).